We begin with the raw amino-acid sequence, 72 residues long: uncharacterized protein (72 aa).

A helical membrane pass occupies residues 46–66 (AIFVFNLCFIPNLCVACIFNV).

It localises to the membrane. This is an uncharacterized protein from Saccharomyces cerevisiae (strain ATCC 204508 / S288c) (Baker's yeast).